A 231-amino-acid chain; its full sequence is Orotidine 5'-phosphate decarboxylase (231 aa).

Substrate-binding positions include aspartate 11, lysine 33, 60 to 69, threonine 120, arginine 181, glutamine 190, glycine 210, and arginine 211; that span reads DLKFHDIPNT. Catalysis depends on lysine 62, which acts as the Proton donor.

The protein belongs to the OMP decarboxylase family. Type 1 subfamily. As to quaternary structure, homodimer.

The enzyme catalyses orotidine 5'-phosphate + H(+) = UMP + CO2. Its pathway is pyrimidine metabolism; UMP biosynthesis via de novo pathway; UMP from orotate: step 2/2. Functionally, catalyzes the decarboxylation of orotidine 5'-monophosphate (OMP) to uridine 5'-monophosphate (UMP). In Pseudoalteromonas atlantica (strain T6c / ATCC BAA-1087), this protein is Orotidine 5'-phosphate decarboxylase.